A 207-amino-acid polypeptide reads, in one-letter code: MRGLFITLEGIEGSGKSTQIEMLYKRLKKDGFDVIITREPGGTPIGKEIRKLLLDPDNIMGAKAEFLLYAADRAQHVVELIKPALESGKVVLADRFIDSSIAYQGYGRGLDIDVVKTVNEWVIDGCWPDLTFVLDLDVEKGLERARGYSPDNQGDRLERELVTFHRRVRQAYHQLAEDRRFIMLDADRSREEIHREIYHKVKGCLIK.

10 to 17 (GIEGSGKS) contacts ATP.

Belongs to the thymidylate kinase family.

It carries out the reaction dTMP + ATP = dTDP + ADP. Functionally, phosphorylation of dTMP to form dTDP in both de novo and salvage pathways of dTTP synthesis. The protein is Thymidylate kinase of Halothermothrix orenii (strain H 168 / OCM 544 / DSM 9562).